The sequence spans 413 residues: Exodeoxyribonuclease 7 large subunit (413 aa).

Belongs to the XseA family. Heterooligomer composed of large and small subunits.

It localises to the cytoplasm. It catalyses the reaction Exonucleolytic cleavage in either 5'- to 3'- or 3'- to 5'-direction to yield nucleoside 5'-phosphates.. In terms of biological role, bidirectionally degrades single-stranded DNA into large acid-insoluble oligonucleotides, which are then degraded further into small acid-soluble oligonucleotides. The chain is Exodeoxyribonuclease 7 large subunit from Corynebacterium efficiens (strain DSM 44549 / YS-314 / AJ 12310 / JCM 11189 / NBRC 100395).